We begin with the raw amino-acid sequence, 101 residues long: Putative pterin-4-alpha-carbinolamine dehydratase (101 aa).

Belongs to the pterin-4-alpha-carbinolamine dehydratase family.

It catalyses the reaction (4aS,6R)-4a-hydroxy-L-erythro-5,6,7,8-tetrahydrobiopterin = (6R)-L-erythro-6,7-dihydrobiopterin + H2O. In Rhizobium leguminosarum bv. trifolii (strain WSM2304), this protein is Putative pterin-4-alpha-carbinolamine dehydratase.